Consider the following 471-residue polypeptide: Eukaryotic translation initiation factor 3 subunit M (471 aa).

Positions 39–61 (EISSLLEPLRQQEQSEEEPDRKQ) are disordered. In terms of domain architecture, PCI spans 206–377 (DFELAQSHVV…SEFLVHRATY (172 aa)). The interval 419–471 (QAATEEANQGKSGEKGGKGGDRRRNPQHQQQQQQSQPSQPQQPRETELVAGAE) is disordered. Residues 430–442 (SGEKGGKGGDRRR) show a composition bias toward basic and acidic residues. A compositionally biased stretch (low complexity) spans 445–461 (QHQQQQQQSQPSQPQQP).

The protein belongs to the eIF-3 subunit M family. In terms of assembly, component of the eukaryotic translation initiation factor 3 (eIF-3) complex.

The protein localises to the cytoplasm. Its function is as follows. Component of the eukaryotic translation initiation factor 3 (eIF-3) complex, which is involved in protein synthesis of a specialized repertoire of mRNAs and, together with other initiation factors, stimulates binding of mRNA and methionyl-tRNAi to the 40S ribosome. The eIF-3 complex specifically targets and initiates translation of a subset of mRNAs involved in cell proliferation. This is Eukaryotic translation initiation factor 3 subunit M from Aspergillus clavatus (strain ATCC 1007 / CBS 513.65 / DSM 816 / NCTC 3887 / NRRL 1 / QM 1276 / 107).